The sequence spans 154 residues: Lymphocyte antigen 6K (154 aa).

A signal peptide spans 1–20; it reads MAFLVALLVVLGLQLVQSNA. In terms of domain architecture, UPAR/Ly6 spans 21–117; that stretch reads LTCHVCEAQN…NGEGPPTDQL (97 aa). G123 carries GPI-anchor amidated glycine lipidation. A propeptide spans 124–154 (removed in mature form); sequence KASGRRHRYIELLLTGFMVLTANGLSALCLL.

Interacts with ADAM3 and TEX101. As to expression, strongly expressed in testes and weakly expressed in the epididymis, ovary, and uterus. Expressed in testicular germ cells (TGCs). Expressed in the testicular seminiferous tubules, in spermatocytes, spermatids, and testicular spermatozoa.

The protein resides in the secreted. It localises to the cytoplasm. It is found in the cell membrane. The protein localises to the cytoplasmic vesicle. Its subcellular location is the secretory vesicle. The protein resides in the acrosome. It localises to the membrane raft. In terms of biological role, required for sperm migration into the oviduct and male fertility by controlling binding of sperm to zona pellucida. May play a role in cell growth. The protein is Lymphocyte antigen 6K of Mus musculus (Mouse).